Consider the following 284-residue polypeptide: Diaminopimelate epimerase (284 aa).

2 residues coordinate substrate: asparagine 14 and asparagine 67. The Proton donor role is filled by cysteine 76. Substrate is bound by residues 77 to 78, asparagine 166, asparagine 199, and 217 to 218; these read GN and ER. Cysteine 226 (proton acceptor) is an active-site residue. 227 to 228 is a substrate binding site; the sequence is GT.

Belongs to the diaminopimelate epimerase family. As to quaternary structure, homodimer.

It is found in the cytoplasm. It catalyses the reaction (2S,6S)-2,6-diaminopimelate = meso-2,6-diaminopimelate. The protein operates within amino-acid biosynthesis; L-lysine biosynthesis via DAP pathway; DL-2,6-diaminopimelate from LL-2,6-diaminopimelate: step 1/1. Its function is as follows. Catalyzes the stereoinversion of LL-2,6-diaminopimelate (L,L-DAP) to meso-diaminopimelate (meso-DAP), a precursor of L-lysine and an essential component of the bacterial peptidoglycan. This Bacillus velezensis (strain DSM 23117 / BGSC 10A6 / LMG 26770 / FZB42) (Bacillus amyloliquefaciens subsp. plantarum) protein is Diaminopimelate epimerase.